The following is a 123-amino-acid chain: MVMITLINNIIRLINSYNSGKNICICIYSKISMLLLGILIEKKIIKSFFVLLFKNKKKIFVIIKTIILIKLFSKPSNKRYIKNKYLKKIEFNNGLIISTNIGLLTIRECLKLKIGGKIFFSII.

It belongs to the universal ribosomal protein uS8 family. As to quaternary structure, part of the 30S ribosomal subunit. Contacts proteins S5 and S12.

One of the primary rRNA binding proteins, it binds directly to 16S rRNA central domain where it helps coordinate assembly of the platform of the 30S subunit. The protein is Small ribosomal subunit protein uS8 (rpsH) of Carsonella ruddii (strain PV).